The primary structure comprises 240 residues: Fatty acid metabolism regulator protein (240 aa).

An HTH gntR-type domain is found at Lys6–Phe74. Positions Glu34–Gln53 form a DNA-binding region, H-T-H motif.

Homodimer.

The protein resides in the cytoplasm. Multifunctional regulator of fatty acid metabolism. The chain is Fatty acid metabolism regulator protein from Shewanella amazonensis (strain ATCC BAA-1098 / SB2B).